Consider the following 455-residue polypeptide: Venom prothrombin activator notecarin-D1 (455 aa).

The first 20 residues, 1–20 (MAPQLLLCLILTFLWSLPEA), serve as a signal peptide directing secretion. A propeptide spanning residues 21-40 (ESNVFLKSKVANRFLQRTKR) is cleaved from the precursor. The Gla domain maps to 41–86 (SNSLFEEIRPGNIERECIEEKCSKEEAREVFEDNEKTETFWNVYVD). E46, E47, E54, E56, E59, E60, E65, E66, E69, E72, and E75 each carry 4-carboxyglutamate. C57 and C62 are joined by a disulfide. An EGF-like 1; calcium-binding domain is found at 86 to 122 (DGDQCSSNPCHYRGTCKDGIGSYTCTCLPNYEGKNCE). 11 disulfide bridges follow: C90–C101, C95–C110, C112–C121, C129–C140, C136–C149, C151–C164, C172–C328, C216–C221, C236–C252, C376–C390, and C401–C429. A glycan (O-linked (Hex...) serine) is linked at S92. Residues 129–164 (CRVDNGNCWHFCKRVQSETQCSCAESYRLGVDGHSC) form the EGF-like 2 domain. The propeptide at 182 to 209 (REASLPDFVQSQKATLLKKSDNPSPDIR) is activation peptide. A Peptidase S1 domain is found at 210 to 453 (IVNGMDCKLG…FIPWIKKIMS (244 aa)). The active-site Charge relay system is H251. N254 is a glycosylation site (N-linked (GlcNAc...) asparagine). The Charge relay system role is filled by D308. Residue S405 is the Charge relay system of the active site.

Belongs to the peptidase S1 family. Snake venom subfamily. Heterodimer of a light chain and a heavy chain; disulfide-linked. Post-translationally, gamma-carboxyglutamate residues are formed by vitamin K dependent carboxylation. These residues are essential for the binding of calcium. As to expression, expressed by the venom gland.

It localises to the secreted. The catalysed reaction is Selective cleavage of Arg-|-Thr and then Arg-|-Ile bonds in prothrombin to form thrombin.. In terms of biological role, snake prothrombin activator that attacks the hemostatic system of prey. This protein is functionally similar to blood coagulation factor Xa. This Notechis scutatus scutatus (Mainland tiger snake) protein is Venom prothrombin activator notecarin-D1.